The chain runs to 1311 residues: AF4/FMR2 family member 2 (1311 aa).

Disordered regions lie at residues L94–D187, P204–A229, and T377–V417. The span at S101–E111 shows a compositional bias: polar residues. Positions S155–H164 are enriched in basic and acidic residues. The span at N165–D187 shows a compositional bias: polar residues. Composition is skewed to polar residues over residues T377 to L396 and Q403 to V417. A Phosphoserine modification is found at S430. Disordered regions lie at residues K457 to L530, T574 to E726, S818 to K867, and P881 to I943. The span at V465–A477 shows a compositional bias: pro residues. Positions V478 to E491 are enriched in low complexity. Phosphothreonine is present on T517. A compositionally biased stretch (basic and acidic residues) spans E582–R597. Residues S615–T625 are compositionally biased toward polar residues. Over residues P655–R668 the composition is skewed to basic and acidic residues. Residues G669–A679 are compositionally biased toward basic residues. Basic and acidic residues predominate over residues P857–K867. Pro residues-rich tracts occupy residues C883 to P892 and F913 to E922.

This sequence belongs to the AF4 family. Brain (most abundant in hippocampus and amygdala), placenta and lung.

It is found in the nucleus speckle. In terms of biological role, RNA-binding protein. Might be involved in alternative splicing regulation through an interaction with G-quartet RNA structure. This Homo sapiens (Human) protein is AF4/FMR2 family member 2.